We begin with the raw amino-acid sequence, 558 residues long: Armadillo repeat-containing X-linked protein 5 (558 aa).

Composition is skewed to basic and acidic residues over residues 1-14 and 139-156; these read MVDS…RGKA and KSHD…REEA. Disordered regions lie at residues 1 to 34 and 139 to 163; these read MVDS…NGKT and KSHD…MKSS. 4 ARM repeats span residues 300-339, 422-461, 463-503, and 520-558; these read CKSR…GISP, VKFE…CLSK, HANT…NINF, and SELI…ILKL.

It belongs to the eutherian X-chromosome-specific Armcx family.

The sequence is that of Armadillo repeat-containing X-linked protein 5 (ARMCX5) from Pongo abelii (Sumatran orangutan).